The primary structure comprises 404 residues: Acetylornithine/succinyldiaminopimelate aminotransferase (404 aa).

Residues 108–109 (GA) and F141 contribute to the pyridoxal 5'-phosphate site. R144 is a N(2)-acetyl-L-ornithine binding site. Residue 226 to 229 (DEIQ) participates in pyridoxal 5'-phosphate binding. Residue K255 is modified to N6-(pyridoxal phosphate)lysine. Residue T283 coordinates N(2)-acetyl-L-ornithine. T284 provides a ligand contact to pyridoxal 5'-phosphate.

It belongs to the class-III pyridoxal-phosphate-dependent aminotransferase family. ArgD subfamily. As to quaternary structure, homodimer. Pyridoxal 5'-phosphate is required as a cofactor.

It localises to the cytoplasm. It carries out the reaction N(2)-acetyl-L-ornithine + 2-oxoglutarate = N-acetyl-L-glutamate 5-semialdehyde + L-glutamate. The catalysed reaction is N-succinyl-(2S,6S)-2,6-diaminopimelate + 2-oxoglutarate = (S)-2-succinylamino-6-oxoheptanedioate + L-glutamate. It functions in the pathway amino-acid biosynthesis; L-arginine biosynthesis; N(2)-acetyl-L-ornithine from L-glutamate: step 4/4. It participates in amino-acid biosynthesis; L-lysine biosynthesis via DAP pathway; LL-2,6-diaminopimelate from (S)-tetrahydrodipicolinate (succinylase route): step 2/3. Involved in both the arginine and lysine biosynthetic pathways. This is Acetylornithine/succinyldiaminopimelate aminotransferase from Buchnera aphidicola subsp. Schizaphis graminum (strain Sg).